Here is a 132-residue protein sequence, read N- to C-terminus: Homeobox protein ceh-1 (132 aa).

The homeobox DNA-binding region spans 1 to 60 (MRRARTAFTYEQLVALENKFKTSRYLSVVERLNLAIQLQLSETQVKIWFQNRRTKWKKHN). Positions 56–80 (WKKHNPGQDANTPQTPPSSDETQIQ) are disordered. Polar residues predominate over residues 63–80 (QDANTPQTPPSSDETQIQ).

The protein resides in the nucleus. The protein is Homeobox protein ceh-1 (ceh-1) of Caenorhabditis elegans.